The primary structure comprises 233 residues: Small ribosomal subunit protein uS3 (233 aa).

One can recognise a KH type-2 domain in the interval 39–107 (IRAFLKRKLY…DVNINIKEER (69 aa)). A compositionally biased stretch (basic and acidic residues) spans 212–222 (MQPEKTEESAP). A disordered region spans residues 212–233 (MQPEKTEESAPAKKPRRTRRGK). The segment covering 224 to 233 (KKPRRTRRGK) has biased composition (basic residues).

The protein belongs to the universal ribosomal protein uS3 family. Part of the 30S ribosomal subunit. Forms a tight complex with proteins S10 and S14.

In terms of biological role, binds the lower part of the 30S subunit head. Binds mRNA in the 70S ribosome, positioning it for translation. In Campylobacter jejuni subsp. jejuni serotype O:6 (strain 81116 / NCTC 11828), this protein is Small ribosomal subunit protein uS3.